The sequence spans 623 residues: Heterogeneous nuclear ribonucleoprotein Q (623 aa).

Ala-2 carries the N-acetylalanine modification. Ser-159 bears the Phosphoserine mark. RRM domains lie at 162–241 (TEIF…ISVA), 243–325 (NRLF…WADP), and 338–408 (KVLF…FAKP). Lys-168 participates in a covalent cross-link: Glycyl lysine isopeptide (Lys-Gly) (interchain with G-Cter in SUMO2). At Lys-221 the chain carries N6-acetyllysine. Position 363 is an N6-acetyllysine (Lys-363). Tyr-373 is modified (phosphotyrosine). Residues 400 to 561 (NIEIVFAKPP…GARGGRGGNV (162 aa)) are interaction with APOBEC1. Arg-444 is modified (asymmetric dimethylarginine; by PRMT1; alternate). At Arg-444 the chain carries Omega-N-methylarginine; by PRMT1; alternate. 6 tandem repeats follow at residues 448-450 (RGG), 451-453 (RGG), 460-464 (YYGYE), 469-472 (YYGY), 478-480 (RGG), and 485-488 (YYGY). An 8 X 3 AA repeats of R-G-G region spans residues 448 to 559 (RGGRGGYGYP…VRGARGGRGG (112 aa)). Residues 460-488 (YYGYEDYYDYYGYDYHNYRGGYEDPYYGY) form a 3 X 4 AA repeats of Y-Y-G-Y region. Arg-496 carries the post-translational modification Omega-N-methylarginine; by PRMT1. The tract at residues 497–623 (GRGGRGARGA…YQDTFGQQWK (127 aa)) is disordered. The stretch at 498–500 (RGG) is one 1-4 repeat. Over residues 504–522 (RGAAPSRGRGAAPPRGRAG) the composition is skewed to low complexity. Position 510 is an asymmetric dimethylarginine; by PRMT1 (Arg-510). Asymmetric dimethylarginine; by PRMT1; alternate occurs at positions 518, 526, 536, and 539. Omega-N-methylarginine; by PRMT1; alternate occurs at positions 518, 526, 536, and 539. The segment at 518–549 (RGRAGYSQRGGPGSARGVRGARGGAQQQRGRG) is interaction with SMN. The 1-5 repeat unit spans residues 526–528 (RGG). Repeat copies occupy residues 539–541 (RGG), 554–556 (RGG), and 557–559 (RGG). The span at 550–562 (VRGARGGRGGNVG) shows a compositional bias: gly residues. The Bipartite nuclear localization signal signature appears at 564 to 578 (KRKADGYNQPDSKRR). Residues 580–595 (TNNQNWGSQPIAQQPL) are compositionally biased toward polar residues. Ser-587 carries the phosphoserine modification. A Glycyl lysine isopeptide (Lys-Gly) (interchain with G-Cter in SUMO2) cross-link involves residue Lys-607. Positions 611–623 (QEFYQDTFGQQWK) are enriched in polar residues.

In terms of assembly, isoform 1 is a component of the APOB mRNA editosome complex and interacts with APOBEC1 and A1CF (APOBEC1 complementation factor). Part of a complex associated with the FOS mCRD domain and consisting of PABPC1, PAIP1, CSDE1/UNR, HNRPD and SYNCRIP. Isoform 3 interacts with HNRPR. Interacts with POLR2A hyperphosphorylated C-terminal domain. Isoform 1, isoform 2 and isoform 3 interact with SMN. Isoform 3 interacts through its C-terminal domain with SYT7, SYT8 and SYT9. The non-phosphorylated and phosphorylated forms are colocalized with PAIP1 in polysomes. Interacts with HABP4. Identified in a histone pre-mRNA complex, at least composed of ERI1, LSM11, SLBP, SNRPB, SYNCRIP and YBX1. Identified in the spliceosome C complex. Component of the coding region determinant (CRD)-mediated complex, composed of DHX9, HNRNPU, IGF2BP1, SYNCRIP and YBX1. Identified in a mRNP complex, at least composed of DHX9, DDX3X, ELAVL1, HNRNPU, IGF2BP1, ILF3, PABPC1, PCBP2, PTBP2, STAU1, STAU2, SYNCRIP and YBX1. Identified in a mRNP granule complex, at least composed of ACTB, ACTN4, DHX9, ERG, HNRNPA1, HNRNPA2B1, HNRNPAB, HNRNPD, HNRNPL, HNRNPR, HNRNPU, HSPA1, HSPA8, IGF2BP1, ILF2, ILF3, NCBP1, NCL, PABPC1, PABPC4, PABPN1, RPLP0, RPS3, RPS3A, RPS4X, RPS8, RPS9, SYNCRIP, YBX1 and untranslated mRNAs. Interacts with GTPBP1. Component of the GAIT complex; in humans the complex assembly seems to be a two-step process in which EPRS1 first associates with SYNCRIP to form a pre-GAIT complex which is deficient in GAIT element binding. As to quaternary structure, (Microbial infection) Interacts with minute virus of mice (MVM) NS1 protein. (Microbial infection) Interacts with herpes virus 8/HHV-8 protein vIRF-1; this interaction induces ubiquitination and degradation of SYNCRIP. In terms of processing, phosphorylated on tyrosine. The membrane-bound form found in microsomes is phosphorylated in vitro by insulin receptor tyrosine kinase (INSR). Phosphorylation is inhibited upon binding to RNA, whereas the cytoplasmic form is poorly phosphorylated. Ubiquitously expressed. Detected in heart, brain, pancreas, placenta, spleen, lung, liver, skeletal muscle, kidney, thymus, prostate, uterus, small intestine, colon, peripheral blood and testis.

The protein localises to the cytoplasm. It localises to the microsome. It is found in the endoplasmic reticulum. Its subcellular location is the nucleus. The protein resides in the nucleoplasm. Heterogenous nuclear ribonucleoprotein (hnRNP) implicated in mRNA processing mechanisms. Component of the CRD-mediated complex that promotes MYC mRNA stability. Isoform 1, isoform 2 and isoform 3 are associated in vitro with pre-mRNA, splicing intermediates and mature mRNA protein complexes. Isoform 1 binds to apoB mRNA AU-rich sequences. Isoform 1 is part of the APOB mRNA editosome complex and may modulate the postranscriptional C to U RNA-editing of the APOB mRNA through either by binding to A1CF (APOBEC1 complementation factor), to APOBEC1 or to RNA itself. May be involved in translationally coupled mRNA turnover. Implicated with other RNA-binding proteins in the cytoplasmic deadenylation/translational and decay interplay of the FOS mRNA mediated by the major coding-region determinant of instability (mCRD) domain. Interacts in vitro preferentially with poly(A) and poly(U) RNA sequences. Isoform 3 may be involved in cytoplasmic vesicle-based mRNA transport through interaction with synaptotagmins. Component of the GAIT (gamma interferon-activated inhibitor of translation) complex which mediates interferon-gamma-induced transcript-selective translation inhibition in inflammation processes. Upon interferon-gamma activation assembles into the GAIT complex which binds to stem loop-containing GAIT elements in the 3'-UTR of diverse inflammatory mRNAs (such as ceruplasmin) and suppresses their translation; seems not to be essential for GAIT complex function. The chain is Heterogeneous nuclear ribonucleoprotein Q (SYNCRIP) from Homo sapiens (Human).